The following is a 79-amino-acid chain: uncharacterized protein (79 aa).

Residues 15–37 form a helical membrane-spanning segment; that stretch reads KSIVSVLALTSLGCGVFVISATA.

Its subcellular location is the membrane. This is an uncharacterized protein from Dictyostelium discoideum (Social amoeba).